The following is a 168-amino-acid chain: CDP-archaeol synthase (168 aa).

Helical transmembrane passes span 7–27, 55–75, 80–100, 109–129, and 130–150; these read PLESILAIIPALAANGAPVLL, GLATGILYGSVIALLAASATC, YAAGVFASIGAMLGDMLGAFI, GAPAPLLDQLDFYSGALLALY, and AAGYVVHPAVALTFTPIVIAL.

It belongs to the CDP-archaeol synthase family. It depends on Mg(2+) as a cofactor.

It localises to the cell membrane. It catalyses the reaction 2,3-bis-O-(geranylgeranyl)-sn-glycerol 1-phosphate + CTP + H(+) = CDP-2,3-bis-O-(geranylgeranyl)-sn-glycerol + diphosphate. It participates in membrane lipid metabolism; glycerophospholipid metabolism. Its function is as follows. Catalyzes the formation of CDP-2,3-bis-(O-geranylgeranyl)-sn-glycerol (CDP-archaeol) from 2,3-bis-(O-geranylgeranyl)-sn-glycerol 1-phosphate (DGGGP) and CTP. This reaction is the third ether-bond-formation step in the biosynthesis of archaeal membrane lipids. The polypeptide is CDP-archaeol synthase (Hyperthermus butylicus (strain DSM 5456 / JCM 9403 / PLM1-5)).